The primary structure comprises 313 residues: Aspartate carbamoyltransferase catalytic subunit (313 aa).

Carbamoyl phosphate is bound by residues arginine 58 and threonine 59. Lysine 86 lines the L-aspartate pocket. Positions 108, 136, and 139 each coordinate carbamoyl phosphate. Residues arginine 169 and arginine 223 each contribute to the L-aspartate site. Glycine 265 and proline 266 together coordinate carbamoyl phosphate.

It belongs to the aspartate/ornithine carbamoyltransferase superfamily. ATCase family. In terms of assembly, heterododecamer (2C3:3R2) of six catalytic PyrB chains organized as two trimers (C3), and six regulatory PyrI chains organized as three dimers (R2).

The enzyme catalyses carbamoyl phosphate + L-aspartate = N-carbamoyl-L-aspartate + phosphate + H(+). It functions in the pathway pyrimidine metabolism; UMP biosynthesis via de novo pathway; (S)-dihydroorotate from bicarbonate: step 2/3. Catalyzes the condensation of carbamoyl phosphate and aspartate to form carbamoyl aspartate and inorganic phosphate, the committed step in the de novo pyrimidine nucleotide biosynthesis pathway. The chain is Aspartate carbamoyltransferase catalytic subunit from Anaeromyxobacter sp. (strain K).